The chain runs to 198 residues: Phosphoheptose isomerase (198 aa).

In terms of domain architecture, SIS spans 40-198; that stretch reads IIGALRGGHK…IEAALMQDAR (159 aa). 55 to 57 provides a ligand contact to substrate; that stretch reads NGG. Residues histidine 64 and glutamate 68 each coordinate Zn(2+). Substrate is bound by residues glutamate 68, 97-98, 123-125, serine 128, and glutamine 175; these read ND and STS. Glutamine 175 and histidine 183 together coordinate Zn(2+).

This sequence belongs to the SIS family. GmhA subfamily. In terms of assembly, homotetramer. Zn(2+) serves as cofactor.

It is found in the cytoplasm. It carries out the reaction 2 D-sedoheptulose 7-phosphate = D-glycero-alpha-D-manno-heptose 7-phosphate + D-glycero-beta-D-manno-heptose 7-phosphate. It participates in carbohydrate biosynthesis; D-glycero-D-manno-heptose 7-phosphate biosynthesis; D-glycero-alpha-D-manno-heptose 7-phosphate and D-glycero-beta-D-manno-heptose 7-phosphate from sedoheptulose 7-phosphate: step 1/1. Functionally, catalyzes the isomerization of sedoheptulose 7-phosphate in D-glycero-D-manno-heptose 7-phosphate. This chain is Phosphoheptose isomerase, found in Bradyrhizobium sp. (strain ORS 278).